We begin with the raw amino-acid sequence, 385 residues long: MSSIPNINWNDPNNGKSNTSRQSQPQPQLPSNVSPPNSRAVPTSGSIGGPQYGSSQFSNEYSRNPNTIGGPPFPLQSNQRGYMPNTGYPVQQTAQQRSGDKLQQVHSQQQQQQQQPLYQQYPPQSVGYLAGDVYNPQHQEYVQMNQLPNQHYNLQQRQQAQGQQLKSQLNEQNAMMSASTQQYPVQDFTNPYPNAQNPAEQQQQQQPLRTQSQQWDGYQSQPLYSAAGNTIPSSIQQQIPPQNLSPSEQQQVKQQQPSPPEQGTKKKPGRKPKLRKLSESSSETPQVPKTASSSSSSPTAVNSGKPITKRSRMGCLTCRQRKKRCCETRPRCTECTRLRLNCTWPKPGTEHKNKPKDQKDDENTIEHAEFGRIKVLRGIVEYRSK.

The segment covering 1-19 (MSSIPNINWNDPNNGKSNT) has biased composition (polar residues). Disordered stretches follow at residues 1–117 (MSSI…QQPL), 154–216 (LQQR…QQWD), and 233–308 (SSIQ…KPIT). A compositionally biased stretch (low complexity) spans 20–38 (SRQSQPQPQLPSNVSPPNS). 2 stretches are compositionally biased toward polar residues: residues 52 to 67 (YGSS…NPNT) and 88 to 97 (YPVQQTAQQR). Composition is skewed to low complexity over residues 102–117 (LQQV…QQPL) and 154–169 (LQQR…KSQL). A compositionally biased stretch (polar residues) spans 170–200 (NEQNAMMSASTQQYPVQDFTNPYPNAQNPAE). Low complexity-rich tracts occupy residues 201–214 (QQQQ…QSQQ) and 233–256 (SSIQ…KQQQ). The segment covering 265-275 (KKKPGRKPKLR) has biased composition (basic residues). Positions 279-291 (ESSSETPQVPKTA) are enriched in polar residues. The segment at residues 315–342 (CLTCRQRKKRCCETRPRCTECTRLRLNC) is a DNA-binding region (zn(2)-C6 fungal-type). The interval 345–364 (PKPGTEHKNKPKDQKDDENT) is disordered. Residues 348-364 (GTEHKNKPKDQKDDENT) are compositionally biased toward basic and acidic residues.

Interacts with EFG1.

It is found in the nucleus. Its function is as follows. Transcriptional regulator of the switch between 2 heritable states, the white and opaque states. These 2 cell types differ in many characteristics, including cell structure, mating competence, and virulence. Each state is heritable for many generations, and switching between states occurs stochastically, at low frequency. Contributes to formation of the opaque state, but is not necessary for heritability of the opaque state. Plays a role in cell adhesion and pseudohyphal growth. Involved in acquisition of drug resistance and acts as a repressor of beta-glucan synthesis, thus negatively regulating cell wall integrity. Plays a role in adherence, invasion and damage to oral epithelial cells. The sequence is that of Zinc cluster transcription factor CZF1 (CZF1) from Candida albicans (strain SC5314 / ATCC MYA-2876) (Yeast).